Reading from the N-terminus, the 577-residue chain is Isocitrate dehydrogenase kinase/phosphatase (577 aa).

ATP contacts are provided by residues 318 to 324 (APGVRGM) and Lys-339. Asp-374 is an active-site residue.

The protein belongs to the AceK family.

It is found in the cytoplasm. It catalyses the reaction L-seryl-[isocitrate dehydrogenase] + ATP = O-phospho-L-seryl-[isocitrate dehydrogenase] + ADP + H(+). In terms of biological role, bifunctional enzyme which can phosphorylate or dephosphorylate isocitrate dehydrogenase (IDH) on a specific serine residue. This is a regulatory mechanism which enables bacteria to bypass the Krebs cycle via the glyoxylate shunt in response to the source of carbon. When bacteria are grown on glucose, IDH is fully active and unphosphorylated, but when grown on acetate or ethanol, the activity of IDH declines drastically concomitant with its phosphorylation. This Pseudomonas aeruginosa (strain ATCC 15692 / DSM 22644 / CIP 104116 / JCM 14847 / LMG 12228 / 1C / PRS 101 / PAO1) protein is Isocitrate dehydrogenase kinase/phosphatase.